The following is a 223-amino-acid chain: ATP-dependent dethiobiotin synthetase BioD (223 aa).

12-17 (EIGKTH) provides a ligand contact to ATP. Residue threonine 16 participates in Mg(2+) binding. Residue lysine 37 is part of the active site. Serine 41 serves as a coordination point for substrate. Residues aspartate 52 and 118-121 (EGVG) each bind ATP. Residues aspartate 52 and glutamate 118 each coordinate Mg(2+).

Belongs to the dethiobiotin synthetase family. In terms of assembly, homodimer. It depends on Mg(2+) as a cofactor.

Its subcellular location is the cytoplasm. It carries out the reaction (7R,8S)-7,8-diammoniononanoate + CO2 + ATP = (4R,5S)-dethiobiotin + ADP + phosphate + 3 H(+). It participates in cofactor biosynthesis; biotin biosynthesis; biotin from 7,8-diaminononanoate: step 1/2. Its function is as follows. Catalyzes a mechanistically unusual reaction, the ATP-dependent insertion of CO2 between the N7 and N8 nitrogen atoms of 7,8-diaminopelargonic acid (DAPA, also called 7,8-diammoniononanoate) to form a ureido ring. In Acidiphilium cryptum (strain JF-5), this protein is ATP-dependent dethiobiotin synthetase BioD.